The sequence spans 122 residues: Large ribosomal subunit protein uL14 (122 aa).

This sequence belongs to the universal ribosomal protein uL14 family. As to quaternary structure, part of the 50S ribosomal subunit. Forms a cluster with proteins L3 and L19. In the 70S ribosome, L14 and L19 interact and together make contacts with the 16S rRNA in bridges B5 and B8.

Binds to 23S rRNA. Forms part of two intersubunit bridges in the 70S ribosome. The polypeptide is Large ribosomal subunit protein uL14 (Rhodospirillum rubrum (strain ATCC 11170 / ATH 1.1.1 / DSM 467 / LMG 4362 / NCIMB 8255 / S1)).